The following is a 790-amino-acid chain: Cadherin-18 (790 aa).

The first 24 residues, 1–24 (MKITSTSCICPVLVCLCFVQRCYG), serve as a signal peptide directing secretion. Residues 25–53 (TAHHSSIKVMRNQTKHIEGETEVHHRPKR) constitute a propeptide that is removed on maturation. The N-linked (GlcNAc...) asparagine glycan is linked to asparagine 36. Cadherin domains lie at 54 to 159 (GWVW…APKF), 160 to 268 (TDGP…PPRF), 269 to 383 (PQKH…PPLF), 384 to 486 (SMPS…DNPP), and 487 to 608 (ELAR…FLSS). Topologically, residues 54 to 608 (GWVWNQFFVL…TCHAEAFLSS (555 aa)) are extracellular. Asparagine 255 carries an N-linked (GlcNAc...) asparagine glycan. N-linked (GlcNAc...) asparagine glycans are attached at residues asparagine 455 and asparagine 536. Residues 609 to 636 (AGLSTGALIAILLCVLILLAIVVLFITL) traverse the membrane as a helical segment. Residues 637–790 (RRSKKEPLII…YGEIESERTT (154 aa)) lie on the Cytoplasmic side of the membrane. Serine 786 bears the Phosphoserine mark.

It localises to the cell membrane. In terms of biological role, cadherins are calcium-dependent cell adhesion proteins. They preferentially interact with themselves in a homophilic manner in connecting cells; cadherins may thus contribute to the sorting of heterogeneous cell types. In Homo sapiens (Human), this protein is Cadherin-18 (CDH18).